The chain runs to 294 residues: Thymidylate synthase (294 aa).

Residues arginine 30 and 156-157 each bind dUMP; that span reads RR. Cysteine 176 serves as the catalytic Nucleophile. Residues 196–199, asparagine 207, and 237–239 each bind dUMP; these read RSGD and HVY. Residue aspartate 199 participates in (6R)-5,10-methylene-5,6,7,8-tetrahydrofolate binding. Alanine 293 contributes to the (6R)-5,10-methylene-5,6,7,8-tetrahydrofolate binding site.

The protein belongs to the thymidylate synthase family. In terms of assembly, homodimer.

The enzyme catalyses dUMP + (6R)-5,10-methylene-5,6,7,8-tetrahydrofolate = 7,8-dihydrofolate + dTMP. Its pathway is pyrimidine metabolism; dTTP biosynthesis. The polypeptide is Thymidylate synthase (Ascaris suum (Pig roundworm)).